Reading from the N-terminus, the 410-residue chain is Subtilisin-like protease CPC735_003880 (410 aa).

An N-terminal signal peptide occupies residues 1–17 (MKLLKSSLLLLLPFVTA). The propeptide occupies 18–118 (NPIPSEDKDI…VTPDRKVYLA (101 aa)). The Inhibitor I9 domain occupies 31–118 (RYIVTLKDGI…VTPDRKVYLA (88 aa)). One can recognise a Peptidase S8 domain in the interval 127 to 410 (GYNLGHMSSK…IQEMNETVIA (284 aa)). The active-site Charge relay system is D159. N-linked (GlcNAc...) asparagine glycosylation is present at N182. The Charge relay system role is filled by H191. N-linked (GlcNAc...) asparagine glycosylation is found at N238, N251, and N338. The active-site Charge relay system is the S347. An N-linked (GlcNAc...) asparagine glycan is attached at N405.

Belongs to the peptidase S8 family.

It is found in the secreted. Its function is as follows. Secreted subtilisin-like serine protease with keratinolytic activity that contributes to pathogenicity. This Coccidioides posadasii (strain C735) (Valley fever fungus) protein is Subtilisin-like protease CPC735_003880.